Reading from the N-terminus, the 321-residue chain is Replication factor C small subunit (321 aa).

Position 43–50 (43–50 (GFAGVGKT)) interacts with ATP.

The protein belongs to the activator 1 small subunits family. RfcS subfamily. In terms of assembly, heteromultimer composed of small subunits (RfcS) and large subunits (RfcL).

Part of the RFC clamp loader complex which loads the PCNA sliding clamp onto DNA. The polypeptide is Replication factor C small subunit (Methanosphaera stadtmanae (strain ATCC 43021 / DSM 3091 / JCM 11832 / MCB-3)).